The sequence spans 322 residues: Outer membrane protein assembly factor BamC (322 aa).

The signal sequence occupies residues 1–22 (MISLLAVAVLAGCSNPETRSQA).

Belongs to the BamC family. Part of the Bam complex.

The protein resides in the cell outer membrane. Its function is as follows. Part of the outer membrane protein assembly complex, which is involved in assembly and insertion of beta-barrel proteins into the outer membrane. The protein is Outer membrane protein assembly factor BamC of Oceanimonas sp. (strain GK1 / IBRC-M 10197).